Here is a 354-residue protein sequence, read N- to C-terminus: Probable L-ascorbate-6-phosphate lactonase UlaG (354 aa).

This sequence belongs to the UlaG family. The cofactor is a divalent metal cation.

It is found in the cytoplasm. It carries out the reaction L-ascorbate 6-phosphate + H2O = 3-dehydro-L-gulonate 6-phosphate. It participates in cofactor degradation; L-ascorbate degradation; D-xylulose 5-phosphate from L-ascorbate: step 1/4. Probably catalyzes the hydrolysis of L-ascorbate-6-P into 3-keto-L-gulonate-6-P. Is essential for L-ascorbate utilization under anaerobic conditions. The protein is Probable L-ascorbate-6-phosphate lactonase UlaG of Salmonella choleraesuis (strain SC-B67).